The chain runs to 84 residues: Large ribosomal subunit protein bL27 (84 aa).

The tract at residues 1–22 (MAKTKAGGSTKNGRDSAGRRLG) is disordered.

The protein belongs to the bacterial ribosomal protein bL27 family.

The protein is Large ribosomal subunit protein bL27 of Mesomycoplasma hyopneumoniae (strain 232) (Mycoplasma hyopneumoniae).